Here is a 156-residue protein sequence, read N- to C-terminus: Ribosomal RNA large subunit methyltransferase H (156 aa).

S-adenosyl-L-methionine is bound by residues Leu-73, Gly-104, and 123–128 (LSPLTF).

It belongs to the RNA methyltransferase RlmH family. In terms of assembly, homodimer.

The protein resides in the cytoplasm. The catalysed reaction is pseudouridine(1915) in 23S rRNA + S-adenosyl-L-methionine = N(3)-methylpseudouridine(1915) in 23S rRNA + S-adenosyl-L-homocysteine + H(+). Specifically methylates the pseudouridine at position 1915 (m3Psi1915) in 23S rRNA. This is Ribosomal RNA large subunit methyltransferase H from Thioalkalivibrio sulfidiphilus (strain HL-EbGR7).